We begin with the raw amino-acid sequence, 616 residues long: Methylmalonyl-CoA mutase small subunit (616 aa).

Belongs to the methylmalonyl-CoA mutase family. Heterodimer of an alpha and a beta chain. Adenosylcob(III)alamin serves as cofactor.

It carries out the reaction (R)-methylmalonyl-CoA = succinyl-CoA. It functions in the pathway metabolic intermediate metabolism; propanoyl-CoA degradation; succinyl-CoA from propanoyl-CoA: step 3/3. Functionally, catalyzes the isomerization of succinyl-CoA to methylmalonyl-CoA during synthesis of propionate from tricarboxylic acid-cycle intermediates. This conversion most likely represents an important source of building blocks for polyketide antibiotic biosynthesis. It is unable to catalyze the conversion of isobutyryl-CoA into N-butyryl-CoA. In Streptomyces virginiae (Streptomyces cinnamonensis), this protein is Methylmalonyl-CoA mutase small subunit (mutA).